A 346-amino-acid polypeptide reads, in one-letter code: MARHPRWTLSQVTELFEKPLLELLFEAQQIHRQHFDPQQVQVSTLLSIKTGACPEDCKYCPQSSRYKTGLEAERLMEVEQVLDSARKAKNAGSTRFCMGAAWKNPHERDMPYLEQIVQGVKAMGLETCMTLGMLNESQAQRLANAGLDYYNHNLDTSPEFYGNIITTRTYQERLDTLEKVREAGIKVCSGGIVGLGETVTDRAGLLLQLANLPTPPESVPINMLVKVKGTPLADNDDVDAFDFIRTIAVARIMMPTSYVRLSAGREQMNEQTQAMCFMAGANSIFYGCKLLTTPNPAEDKDLQLFRKLGLNPQQTRVLAGDNEQQQRLEQTLMTPDTDDYYNAAAL.

The Radical SAM core domain occupies 38–256; the sequence is QQVQVSTLLS…IAVARIMMPT (219 aa). [4Fe-4S] cluster-binding residues include Cys53, Cys57, and Cys60. [2Fe-2S] cluster contacts are provided by Cys97, Cys128, Cys188, and Arg260.

The protein belongs to the radical SAM superfamily. Biotin synthase family. As to quaternary structure, homodimer. Requires [4Fe-4S] cluster as cofactor. [2Fe-2S] cluster is required as a cofactor.

The enzyme catalyses (4R,5S)-dethiobiotin + (sulfur carrier)-SH + 2 reduced [2Fe-2S]-[ferredoxin] + 2 S-adenosyl-L-methionine = (sulfur carrier)-H + biotin + 2 5'-deoxyadenosine + 2 L-methionine + 2 oxidized [2Fe-2S]-[ferredoxin]. It participates in cofactor biosynthesis; biotin biosynthesis; biotin from 7,8-diaminononanoate: step 2/2. Its function is as follows. Catalyzes the conversion of dethiobiotin (DTB) to biotin by the insertion of a sulfur atom into dethiobiotin via a radical-based mechanism. The sequence is that of Biotin synthase from Salmonella dublin (strain CT_02021853).